Consider the following 582-residue polypeptide: Probable DNA ligase (582 aa).

E243 is a binding site for ATP. Catalysis depends on K245, which acts as the N6-AMP-lysine intermediate. The ATP site is built by R250, R265, E295, F335, R410, and K416.

The protein belongs to the ATP-dependent DNA ligase family. It depends on Mg(2+) as a cofactor.

The catalysed reaction is ATP + (deoxyribonucleotide)n-3'-hydroxyl + 5'-phospho-(deoxyribonucleotide)m = (deoxyribonucleotide)n+m + AMP + diphosphate.. Functionally, DNA ligase that seals nicks in double-stranded DNA during DNA replication, DNA recombination and DNA repair. This chain is Probable DNA ligase, found in Dictyoglomus thermophilum (strain ATCC 35947 / DSM 3960 / H-6-12).